The chain runs to 119 residues: MSRVKRGVTAHAKHKKVYKAAKGFYGRRKNTIRAAKPAVEKAQQYAFRDRKRKKRTFRALWIQRLNAAVRPFGLTYSRFIDGLAKSGITVDRKVLSDLAINEPASFQAIAEKAKAALAA.

Belongs to the bacterial ribosomal protein bL20 family.

In terms of biological role, binds directly to 23S ribosomal RNA and is necessary for the in vitro assembly process of the 50S ribosomal subunit. It is not involved in the protein synthesizing functions of that subunit. This is Large ribosomal subunit protein bL20 from Bradyrhizobium diazoefficiens (strain JCM 10833 / BCRC 13528 / IAM 13628 / NBRC 14792 / USDA 110).